We begin with the raw amino-acid sequence, 686 residues long: MGEFKVHRVRFFNYVPSGIRCVAYNNQSNRLAVSRTDGTVEIYNLSANYFQEKFFPGHESRGTEALCWAGGQRLFSAGLNGEILEYDLQALNIKYTLDAFGGPIWSMTASPSGSQLLVGCEDGSVKLFEVTPEKIQFARNFDRQKSRILSLCWHPAGTHVAAGSLDYISVFDVKSGSIIRKMVLDRQHLGVTKSRCIVWGVAFLSDGTVISVDSVGKVQLWDSATGTLVKSHLVANADVQSIAVADQEDSFVVGTAEGTVFHFQLVSMTSNSSEKQWVRTKPFQHHTHDVRAVAHSPTALISGGTDTHLVIRPLMERVEVKNYDAALRKITFPHRRLISCSKRRQLLLFQFAHHLELWRLGSTSATGKNGDTLPLSKNADHLLHLKTKGPENIICSCVSPCGSWIAYSTASRFFLYRLKYERDNISLQRVSKLPSFLRSALHILFSEDSTKLLVASNQGSLHIVHLSEGSFKHLHTFQPQSGTVEAMCLLAVSPDGNWLAASGTSAGVHVYDLHHLKLHCTVPAYNFPVTALAIAPNTNNLVIAHSDQQVFEFSIPEKQYTEWSRSLQKQGFHQLWLQRDTPITHISFHPKRPMHILLHDAYMFCIIDKSLPLPNEKTVLYNPLPPKNESDVFLRRTTHGFKMSKIYKPLLFMDLLDERTLVAVERPLDDIIAQLPPPIKKKKFGT.

WD repeat units follow at residues 14–53 (YVPS…FQEK), 57–96 (GHES…IKYT), 99–138 (AFGG…IQFA), 143–181 (RQKS…IIRK), 193–231 (KSRC…LVKS), 234–273 (VANA…SNSS), 285–322 (HHTH…EVKN), 324–359 (DAAL…ELWR), 435–474 (SFLR…FKHL), 482–521 (GTVE…LHCT), and 524–563 (AYNF…YTEW). Lys-321 participates in a covalent cross-link: Glycyl lysine isopeptide (Lys-Gly) (interchain with G-Cter in SUMO2).

As to quaternary structure, interacts with HIVEP1 Interacts with NOL11. Part of the small subunit (SSU) processome, composed of more than 70 proteins and the RNA chaperone small nucleolar RNA (snoRNA) U3. May be a component of the proposed t-UTP subcomplex of the ribosomal small subunit (SSU) processome containing at least UTP4, WDR43, HEATR1, UTP15, WDR75. Post-translationally, may be phosphorylated during mitosis; may control the association of this protein with WRD43 and UTP15. As to expression, expressed in liver.

Its subcellular location is the nucleus. It is found in the nucleolus. The protein localises to the chromosome. Its function is as follows. Ribosome biogenesis factor. Involved in nucleolar processing of pre-18S ribosomal RNA. Part of the small subunit (SSU) processome, first precursor of the small eukaryotic ribosomal subunit. During the assembly of the SSU processome in the nucleolus, many ribosome biogenesis factors, an RNA chaperone and ribosomal proteins associate with the nascent pre-rRNA and work in concert to generate RNA folding, modifications, rearrangements and cleavage as well as targeted d Involved in SSU pre-rRNA processing at sites A', A0, 1 and 2b. Required for optimal pre-ribosomal RNA transcription by RNA polymerase. May be a transcriptional regulator. The chain is U3 small nucleolar RNA-associated protein 4 homolog (Utp4) from Mus musculus (Mouse).